Consider the following 246-residue polypeptide: tRNA (guanine-N(7)-)-methyltransferase (246 aa).

Residues Glu77, Glu102, Asp129, and Asp152 each contribute to the S-adenosyl-L-methionine site. Asp152 is a catalytic residue. Substrate contacts are provided by residues Lys156, Asp188, and 225 to 228; that span reads TKFE.

The protein belongs to the class I-like SAM-binding methyltransferase superfamily. TrmB family.

It catalyses the reaction guanosine(46) in tRNA + S-adenosyl-L-methionine = N(7)-methylguanosine(46) in tRNA + S-adenosyl-L-homocysteine. It participates in tRNA modification; N(7)-methylguanine-tRNA biosynthesis. In terms of biological role, catalyzes the formation of N(7)-methylguanine at position 46 (m7G46) in tRNA. This Haemophilus influenzae (strain PittGG) protein is tRNA (guanine-N(7)-)-methyltransferase.